The chain runs to 91 residues: DNA-directed RNA polymerase subunit Rpo11 (91 aa).

It belongs to the archaeal Rpo11/eukaryotic RPB11/RPC19 RNA polymerase subunit family. In terms of assembly, part of the RNA polymerase complex.

It localises to the cytoplasm. It carries out the reaction RNA(n) + a ribonucleoside 5'-triphosphate = RNA(n+1) + diphosphate. Its function is as follows. DNA-dependent RNA polymerase (RNAP) catalyzes the transcription of DNA into RNA using the four ribonucleoside triphosphates as substrates. The protein is DNA-directed RNA polymerase subunit Rpo11 of Methanococcoides burtonii (strain DSM 6242 / NBRC 107633 / OCM 468 / ACE-M).